The following is an 883-amino-acid chain: Puromycin-sensitive aminopeptidase (883 aa).

Residues glutamate 125 and 265–269 (GAMEN) contribute to the substrate site. Histidine 301 provides a ligand contact to Zn(2+). Glutamate 302 serves as the catalytic Proton acceptor. Residues histidine 305 and glutamate 324 each coordinate Zn(2+).

The protein belongs to the peptidase M1 family. Zn(2+) is required as a cofactor.

The catalysed reaction is Release of an N-terminal amino acid, preferentially alanine, from a wide range of peptides, amides and arylamides.. Strongly inhibited by puromycin and DAMPAQ-22. Aminopeptidase with broad substrate specificity for several peptides. Involved in proteolytic events essential for cell growth and viability. Plays an essential role during prophase I of meiosis. Required for correct meiotic reconbination in both male and female gametophytes. The polypeptide is Puromycin-sensitive aminopeptidase (MPA1) (Arabidopsis thaliana (Mouse-ear cress)).